The following is a 411-amino-acid chain: Argininosuccinate synthase (411 aa).

ATP contacts are provided by residues 15–23 and A42; that span reads AYSGGLDTS. L-citrulline-binding residues include Y93 and S98. G123 provides a ligand contact to ATP. L-aspartate contacts are provided by T125, N129, and D130. N129 serves as a coordination point for L-citrulline. L-citrulline-binding residues include R133, S185, S194, E270, and Y282.

It belongs to the argininosuccinate synthase family. Type 1 subfamily. As to quaternary structure, homotetramer.

The protein localises to the cytoplasm. The catalysed reaction is L-citrulline + L-aspartate + ATP = 2-(N(omega)-L-arginino)succinate + AMP + diphosphate + H(+). Its pathway is amino-acid biosynthesis; L-arginine biosynthesis; L-arginine from L-ornithine and carbamoyl phosphate: step 2/3. The chain is Argininosuccinate synthase from Psychrobacter sp. (strain PRwf-1).